The following is a 593-amino-acid chain: Tectonic-1 (593 aa).

The N-terminal stretch at 1 to 22 is a signal peptide; sequence MGSRGLPPLLLVLLNCYTSSST. Positions 37-72 are disordered; it reads KEDLNSTKATPTTLQPSLSPRTPGTPRAPERSGPRP. An N-linked (GlcNAc...) asparagine glycan is attached at Asn41. Residues 42 to 58 are compositionally biased toward polar residues; that stretch reads STKATPTTLQPSLSPRT. A glycan (N-linked (GlcNAc...) asparagine) is linked at Asn303. Position 486 is an omega-N-methylarginine (Arg486). Residue Asn536 is glycosylated (N-linked (GlcNAc...) asparagine).

The protein belongs to the tectonic family. Part of the tectonic-like complex (also named B9 complex).

It localises to the cytoplasm. The protein localises to the cytoskeleton. Its subcellular location is the cilium basal body. The protein resides in the secreted. Component of the tectonic-like complex, a complex localized at the transition zone of primary cilia and acting as a barrier that prevents diffusion of transmembrane proteins between the cilia and plasma membranes. Regulator of Hedgehog (Hh), required for both activation and inhibition of the Hh pathway in the patterning of the neural tube. During neural tube development, it is required for formation of the most ventral cell types and for full Hh pathway activation. Functions in Hh signal transduction to fully activate the pathway in the presence of high Hh levels and to repress the pathway in the absence of Hh signals. Modulates Hh signal transduction downstream of SMO and RAB23. This is Tectonic-1 (Tctn1) from Mus musculus (Mouse).